The primary structure comprises 353 residues: Protein RecA (353 aa).

75–82 (GPESSGKT) contacts ATP.

This sequence belongs to the RecA family.

Its subcellular location is the cytoplasm. Can catalyze the hydrolysis of ATP in the presence of single-stranded DNA, the ATP-dependent uptake of single-stranded DNA by duplex DNA, and the ATP-dependent hybridization of homologous single-stranded DNAs. It interacts with LexA causing its activation and leading to its autocatalytic cleavage. The sequence is that of Protein RecA from Cupriavidus necator (Alcaligenes eutrophus).